A 177-amino-acid polypeptide reads, in one-letter code: Phycoerythrin beta subunit (177 aa).

Residues Y18, K28, N35, and D39 each contribute to the (2R,3E)-phycoerythrobilin site. 3 residues coordinate 15,16-dihydrobiliverdin: C50, D54, and C61. Positions 82, 84, and 85 each coordinate (2R,3E)-phycoerythrobilin. Position 129 (R129) interacts with 15,16-dihydrobiliverdin. N144 is a binding site for (2R,3E)-phycoerythrobilin. Q148 and K149 together coordinate 15,16-dihydrobiliverdin. (2R,3E)-phycoerythrobilin-binding residues include P154, G156, and C158.

Belongs to the phycobiliprotein family. Heterotetramer of 2 different alpha chains and 2 identical beta chains which form 2 alpha-beta heterodimers within the heterotetramer. The two alpha-beta heterodimers are rotated to an open configuration in contrast to the closed configuration found in other cryptophyte species due to the insertion of a single amino acid, 'Asp-65', in a conserved region of the alpha chain. In the open form, the central chromophores are not in physical contact but are separated by a water-filled channel. In terms of processing, contains three phycoerythrobilin chromophores and one 15,16-dihydrobiliverdin chromophore with binding of the phycoerythrobilin chromophores mediated by both the alpha and beta subunits.

It is found in the plastid. It localises to the chloroplast thylakoid membrane. Its function is as follows. Light-harvesting photosynthetic bile pigment-protein from the phycobiliprotein complex. The sequence is that of Phycoerythrin beta subunit from Hemiselmis andersenii (Cryptophyte alga).